The following is a 636-amino-acid chain: Probable potassium transport system protein Kup (636 aa).

12 consecutive transmembrane segments (helical) span residues 22-42 (VGLL…SPLY), 64-84 (ILSL…VMFI), 115-135 (LMVI…MITP), 150-170 (FDGI…ALFL), 182-202 (LFGP…VHGI), 220-240 (FFVV…LALT), 261-281 (WFIL…ALLL), 293-313 (LLAP…ATVI), 351-371 (IYIG…VIGF), 383-403 (VAVT…MLLL), 408-428 (PLLA…FFAA), and 433-453 (IAQG…LMST).

Belongs to the HAK/KUP transporter (TC 2.A.72) family.

The protein localises to the cell inner membrane. The catalysed reaction is K(+)(in) + H(+)(in) = K(+)(out) + H(+)(out). Functionally, transport of potassium into the cell. Likely operates as a K(+):H(+) symporter. The sequence is that of Probable potassium transport system protein Kup from Pseudomonas putida (strain ATCC 47054 / DSM 6125 / CFBP 8728 / NCIMB 11950 / KT2440).